Reading from the N-terminus, the 280-residue chain is Lysosome-associated membrane glycoprotein 5 (280 aa).

An N-terminal signal peptide occupies residues 1 to 29; sequence MDLQGRGVPSIDRLRVLLMLFHTMAQIMA. Residues 30–235 are Extracellular-facing; it reads EQEVENLSGL…PVDEREQLEE (206 aa). N35, N53, and N127 each carry an N-linked (GlcNAc...) asparagine glycan. A helical transmembrane segment spans residues 236–256; it reads TLPLILGLILGLVIMVTLAIY. Residues 257-280 lie on the Cytoplasmic side of the membrane; it reads HVHHKMTANQVQIPRDRSQYKHMG.

Belongs to the LAMP family. Post-translationally, glycosylated. As to expression, expressed in plasmocytoid dendritic cells. Expressed in suprabasal skin keratinocytes and squamous cells (at protein level). Expressed in the brain and weakly in spleen and skin. Expressed in plasmocytoid dendritic cells.

Its subcellular location is the cell membrane. The protein localises to the cytoplasmic vesicle. The protein resides in the secretory vesicle. It is found in the synaptic vesicle membrane. It localises to the endoplasmic reticulum-Golgi intermediate compartment membrane. Its subcellular location is the endosome membrane. The protein localises to the cytoplasmic vesicle membrane. The protein resides in the cell projection. It is found in the dendrite. It localises to the growth cone membrane. Its subcellular location is the early endosome membrane. The protein localises to the recycling endosome. Plays a role in short-term synaptic plasticity in a subset of GABAergic neurons in the brain. In Homo sapiens (Human), this protein is Lysosome-associated membrane glycoprotein 5 (LAMP5).